Here is a 338-residue protein sequence, read N- to C-terminus: RNA 3'-terminal phosphate cyclase (338 aa).

ATP is bound by residues glutamine 103 and 283-287; that span reads YLADQ. Histidine 308 (tele-AMP-histidine intermediate) is an active-site residue.

This sequence belongs to the RNA 3'-terminal cyclase family. Type 1 subfamily.

It localises to the cytoplasm. The catalysed reaction is a 3'-end 3'-phospho-ribonucleotide-RNA + ATP = a 3'-end 2',3'-cyclophospho-ribonucleotide-RNA + AMP + diphosphate. Catalyzes the conversion of 3'-phosphate to a 2',3'-cyclic phosphodiester at the end of RNA. The mechanism of action of the enzyme occurs in 3 steps: (A) adenylation of the enzyme by ATP; (B) transfer of adenylate to an RNA-N3'P to produce RNA-N3'PP5'A; (C) and attack of the adjacent 2'-hydroxyl on the 3'-phosphorus in the diester linkage to produce the cyclic end product. The biological role of this enzyme is unknown but it is likely to function in some aspects of cellular RNA processing. This is RNA 3'-terminal phosphate cyclase from Escherichia coli (strain K12 / MC4100 / BW2952).